The chain runs to 52 residues: DNA-directed RNA polymerase subunit Rpo12 (52 aa).

Zn(2+) is bound by residues Cys-13, Cys-30, and Cys-33.

The protein belongs to the archaeal Rpo12/eukaryotic RPC10 RNA polymerase subunit family. As to quaternary structure, part of the RNA polymerase complex. Zn(2+) is required as a cofactor.

The protein resides in the cytoplasm. The catalysed reaction is RNA(n) + a ribonucleoside 5'-triphosphate = RNA(n+1) + diphosphate. Its function is as follows. DNA-dependent RNA polymerase (RNAP) catalyzes the transcription of DNA into RNA using the four ribonucleoside triphosphates as substrates. The sequence is that of DNA-directed RNA polymerase subunit Rpo12 from Pyrobaculum neutrophilum (strain DSM 2338 / JCM 9278 / NBRC 100436 / V24Sta) (Thermoproteus neutrophilus).